The following is a 395-amino-acid chain: Pyridinium-3,5-bisthiocarboxylic acid mononucleotide nickel insertion protein (395 aa).

The protein belongs to the LarC family.

It carries out the reaction Ni(II)-pyridinium-3,5-bisthiocarboxylate mononucleotide = pyridinium-3,5-bisthiocarboxylate mononucleotide + Ni(2+). Its function is as follows. Involved in the biosynthesis of a nickel-pincer cofactor ((SCS)Ni(II) pincer complex). Binds Ni(2+), and functions in nickel delivery to pyridinium-3,5-bisthiocarboxylic acid mononucleotide (P2TMN), to form the mature cofactor. Is thus probably required for the activation of nickel-pincer cofactor-dependent enzymes. The polypeptide is Pyridinium-3,5-bisthiocarboxylic acid mononucleotide nickel insertion protein (Staphylococcus epidermidis (strain ATCC 12228 / FDA PCI 1200)).